A 390-amino-acid chain; its full sequence is D-alanyl-D-alanine carboxypeptidase DacD (390 aa).

A signal peptide spans Met-1 to Ala-23. The Acyl-ester intermediate role is filled by Ser-65. The active-site Proton acceptor is Lys-68. Ser-131 is a catalytic residue. Lys-234 lines the substrate pocket.

Belongs to the peptidase S11 family.

It is found in the cell inner membrane. The enzyme catalyses Preferential cleavage: (Ac)2-L-Lys-D-Ala-|-D-Ala. Also transpeptidation of peptidyl-alanyl moieties that are N-acyl substituents of D-alanine.. The protein operates within cell wall biogenesis; peptidoglycan biosynthesis. Its function is as follows. Removes C-terminal D-alanyl residues from sugar-peptide cell wall precursors. The polypeptide is D-alanyl-D-alanine carboxypeptidase DacD (dacD) (Salmonella typhimurium (strain LT2 / SGSC1412 / ATCC 700720)).